Consider the following 124-residue polypeptide: Mediator of RNA polymerase II transcription subunit 31 (124 aa).

The protein belongs to the Mediator complex subunit 31 family. Component of the Mediator complex.

It localises to the nucleus. Its function is as follows. Component of the Mediator complex, a coactivator involved in the regulated transcription of nearly all RNA polymerase II-dependent genes. Mediator functions as a bridge to convey information from gene-specific regulatory proteins to the basal RNA polymerase II transcription machinery. Mediator is recruited to promoters by direct interactions with regulatory proteins and serves as a scaffold for the assembly of a functional preinitiation complex with RNA polymerase II and the general transcription factors. The protein is Mediator of RNA polymerase II transcription subunit 31 (SOH1) of Kluyveromyces lactis (strain ATCC 8585 / CBS 2359 / DSM 70799 / NBRC 1267 / NRRL Y-1140 / WM37) (Yeast).